Consider the following 225-residue polypeptide: Endonuclease V (225 aa).

Mg(2+)-binding residues include Asp-43 and Asp-110. Interaction with target DNA regions lie at residues 139 to 141 (KSR) and 214 to 221 (HIYTQRLK).

Belongs to the endonuclease V family. It depends on Mg(2+) as a cofactor.

It localises to the cytoplasm. The enzyme catalyses Endonucleolytic cleavage at apurinic or apyrimidinic sites to products with a 5'-phosphate.. Functionally, DNA repair enzyme involved in the repair of deaminated bases. Selectively cleaves double-stranded DNA at the second phosphodiester bond 3' to a deoxyinosine leaving behind the intact lesion on the nicked DNA. In vitro, can also cleave single-stranded substrates with inosine, double-stranded DNA with apurinic sites, or DNA sites with uracil or a mismatched base. When present in molar excess, two protein molecules can bind to the same DNA substrate and effect cleavage of both strands (in vitro). In Thermotoga maritima (strain ATCC 43589 / DSM 3109 / JCM 10099 / NBRC 100826 / MSB8), this protein is Endonuclease V.